The chain runs to 943 residues: MAERPEERQWKEWEEAGLFEADPDDRESVYITVAYPYPSGSMHVGHARTYLVPDIYARFKRMQGYNVLFPMAFHVTGTPVVGIAERIKEGDEDTIRLYRDLYGVPEEELEKFTEPEAIVEYFAREYEENMKRMGYSIDWRRKFTTVDPEYRSFITWQYLRLREKGLVDKGEHPVRYCPHCENPVGDHDLLEGEDATIEELTLVKFPVEGDDLILVAATFRPETLYGATNVWVKPDEEYLVVEVDGERWVVSEEAYRNLRHQKDGVEKVDTVRGEELIGESVVNPVTGEALPVLPAEFIDPKFGTGVVYSVPAHAPADAAALEDLKKDPSVLEEYGVDPSVVEELEPVQVIEVEGYGEFPAYDALEEHGIESQTDPELEKATQEVYRAELHKGVMVVDEFEGTPVREAREEIKSRLIESGDADVMYDFSEKPVICRCGTECVVRILKDQWFLRYSDGEWKERAEELLGRMEIVPEEVRANFEDTIEWLDDWACARRVGLGTPLPWDPDWIVEPLSDSTVYMAYYTIAHRLKGKGELPPEVFDYVFLGEGDPEEIAEKAGLDVEELEAMREEFEYWYPLNWRLSAKDLVTNHLTFFIFHHAALFPEDKWPKGIVVFGMGLLEGQKMSSSKGNVVLLSEALDEYGPDVVRLFLATSAEPWQDFDWRDEYVRGVQRHLERFETLIRDHADESVEDKDAVDRWFLHEFREVVEETTEALEGFQIRRAYNRAFYGVMKLLREYEAMKGHVKILGEIAEDWLKLLHPVIPFATDRLWREVLGEDSFLLEEEWPDPSEYPEEPELSVAKEVLDRLIEDVRDVEKVIGAEPGYTLHVYLAPEWQWRALELILKDKEFGEVMSELMKDEGLREKGDEVAKIVQELTKEDLPEDVDVDALREALTEFLEAAGRALTDKTGASEVVIHTDPEEAPGPEDRKAGARPLRPGIWLEE.

The 'HIGH' region motif lies at 36-46 (PYPSGSMHVGH). The short motif at 623–627 (KMSSS) is the 'KMSKS' region element. The tract at residues 910-943 (ASEVVIHTDPEEAPGPEDRKAGARPLRPGIWLEE) is disordered. Over residues 915–930 (IHTDPEEAPGPEDRKA) the composition is skewed to basic and acidic residues.

This sequence belongs to the class-I aminoacyl-tRNA synthetase family.

It is found in the cytoplasm. It carries out the reaction tRNA(Leu) + L-leucine + ATP = L-leucyl-tRNA(Leu) + AMP + diphosphate. The sequence is that of Leucine--tRNA ligase from Methanopyrus kandleri (strain AV19 / DSM 6324 / JCM 9639 / NBRC 100938).